Here is a 149-residue protein sequence, read N- to C-terminus: Glycine cleavage system H protein (149 aa).

One can recognise a Lipoyl-binding domain in the interval 23-104; the sequence is LIWVGISNHA…PYGIWLFKIN (82 aa). Lys64 carries the N6-lipoyllysine modification.

This sequence belongs to the GcvH family. As to quaternary structure, the glycine cleavage system is composed of four proteins: P, T, L and H. It depends on (R)-lipoate as a cofactor.

The glycine cleavage system catalyzes the degradation of glycine. The H protein shuttles the methylamine group of glycine from the P protein to the T protein. This Polynucleobacter necessarius subsp. necessarius (strain STIR1) protein is Glycine cleavage system H protein.